Here is a 342-residue protein sequence, read N- to C-terminus: Protein RecA (342 aa).

The protein belongs to the RecA family.

The protein localises to the cytoplasm. Its function is as follows. Can catalyze the hydrolysis of ATP in the presence of single-stranded DNA, the ATP-dependent uptake of single-stranded DNA by duplex DNA, and the ATP-dependent hybridization of homologous single-stranded DNAs. It interacts with LexA causing its activation and leading to its autocatalytic cleavage. The sequence is that of Protein RecA from Pectobacterium carotovorum (Erwinia carotovora).